We begin with the raw amino-acid sequence, 154 residues long: Transcriptional repressor NrdR (154 aa).

A zinc finger lies at Cys-3–Cys-34. The ATP-cone domain occupies Pro-49–Glu-139.

The protein belongs to the NrdR family. It depends on Zn(2+) as a cofactor.

Functionally, negatively regulates transcription of bacterial ribonucleotide reductase nrd genes and operons by binding to NrdR-boxes. The polypeptide is Transcriptional repressor NrdR (Pseudomonas putida (strain GB-1)).